The primary structure comprises 54 residues: uncharacterized protein (54 aa).

The protein belongs to the ycf18/nblA family.

Its subcellular location is the plastid. The protein resides in the chloroplast. This is an uncharacterized protein from Cyanidium caldarium (Red alga).